Here is a 343-residue protein sequence, read N- to C-terminus: Small ribosomal subunit biogenesis GTPase RsgA (343 aa).

One can recognise a CP-type G domain in the interval 116–275; it reads RGQLKPVAAN…LIDSPGIREF (160 aa). GTP is bound by residues 163–166 and 217–225; these read NKAD and GQSGVGKSS. Zn(2+) contacts are provided by cysteine 299, cysteine 304, histidine 306, and cysteine 312.

This sequence belongs to the TRAFAC class YlqF/YawG GTPase family. RsgA subfamily. Monomer. Associates with 30S ribosomal subunit, binds 16S rRNA. It depends on Zn(2+) as a cofactor.

It is found in the cytoplasm. Functionally, one of several proteins that assist in the late maturation steps of the functional core of the 30S ribosomal subunit. Helps release RbfA from mature subunits. May play a role in the assembly of ribosomal proteins into the subunit. Circularly permuted GTPase that catalyzes slow GTP hydrolysis, GTPase activity is stimulated by the 30S ribosomal subunit. This is Small ribosomal subunit biogenesis GTPase RsgA from Pseudomonas syringae pv. syringae (strain B728a).